The chain runs to 238 residues: Large ribosomal subunit protein uL3 (238 aa).

It belongs to the universal ribosomal protein uL3 family. Part of the 50S ribosomal subunit. Forms a cluster with proteins L14 and L19.

In terms of biological role, one of the primary rRNA binding proteins, it binds directly near the 3'-end of the 23S rRNA, where it nucleates assembly of the 50S subunit. The polypeptide is Large ribosomal subunit protein uL3 (Mesoplasma florum (strain ATCC 33453 / NBRC 100688 / NCTC 11704 / L1) (Acholeplasma florum)).